Here is a 199-residue protein sequence, read N- to C-terminus: MTECFLSDQEIRKLNRDLRILIAANGTLTRVLNIVADDEVIVQIVKQRIHDVSPKLSEFEQLGQVGVGRVLQRYIILKGRNSEHLFVAAESLIAIDRLPAAIITRLTQTNDPLGEVMAASHIETFKEEAKVWVGDLPGWLALHGYQNSRKRAVARRYRVISGGQPIMVVTEHFLRSVFRDAPHEEPDRWQFSNAITLAR.

The protein belongs to the chorismate pyruvate-lyase type 2 family.

It carries out the reaction chorismate = 4-hydroxybenzoate + pyruvate. In terms of biological role, removes the pyruvyl group from chorismate to provide 4-hydroxybenzoate (4HB). Involved in the synthesis of glycosylated p-hydroxybenzoic acid methyl esters (p-HBADs) and phenolic glycolipids (PGL) that play important roles in the pathogenesis of mycobacterial infections. The sequence is that of Chorismate pyruvate-lyase from Mycobacterium bovis (strain ATCC BAA-935 / AF2122/97).